A 562-amino-acid chain; its full sequence is TBC1 domain family member 24 (562 aa).

A 1,2-diacyl-sn-glycero-3-phospho-(1D-myo-inositol) contacts are provided by residues lysine 36, arginine 40, lysine 238, arginine 242, and 293–297; that span reads RLFSR. Residues 42 to 259 form the Rab-GAP TBC domain; that stretch reads GHWAKSHTLR…FFHKVRGGQP (218 aa). The TLDc domain occupies 337–549; the sequence is EIVSVKEMRD…ISIIEVWGFK (213 aa). A disordered region spans residues 450–471; that stretch reads NSSSADKEANSSQSDKDGIDPS. The segment covering 454–468 has biased composition (basic and acidic residues); it reads ADKEANSSQSDKDGI.

As to quaternary structure, interacts with ARF6.

The protein resides in the cell membrane. The protein localises to the cytoplasm. It localises to the cytoplasmic vesicle membrane. Its subcellular location is the presynapse. In terms of biological role, may act as a GTPase-activating protein for Rab family protein(s). Involved in neuronal projections development, probably through a negative modulation of ARF6 function. Involved in the regulation of synaptic vesicle trafficking. The polypeptide is TBC1 domain family member 24 (tbc1d24) (Xenopus laevis (African clawed frog)).